The sequence spans 161 residues: Cap-associated protein CAF20 (161 aa).

Residues 52-72 (HFGRRRSSHHHGRPKIKHNKP) are compositionally biased toward basic residues. Positions 52–108 (HFGRRRSSHHHGRPKIKHNKPKVTTDSDGWCTFEAKKKGSGEDDEEETETTPTSTVP) are disordered. Residues Ser-78 and Ser-91 each carry the phosphoserine modification. 3 positions are modified to phosphothreonine: Thr-99, Thr-101, and Thr-102. Ser-154 carries the phosphoserine modification.

It belongs to the CAF20 family. Interacts with TIF45. Post-translationally, phosphorylated by casein kinase II complex (CK2).

It is found in the cytoplasm. Its function is as follows. Acts as an inhibitor of cap-dependent translation. Competes with eIF4G1/TIF4631 and EAP1 for binding to eIF4E/TIF45 and interferes with the formation of the eIF4F complex, inhibiting translation and stabilizing mRNA. Binding affinity for eIF4E/TIF45 is 10-fold less than that of eIF4G1/TIF4631. Required for induction of pseudohyphal growth in response to nitrogen limitation, probably by regulating STE12 translation. The polypeptide is Cap-associated protein CAF20 (CAF20) (Saccharomyces cerevisiae (strain ATCC 204508 / S288c) (Baker's yeast)).